Reading from the N-terminus, the 193-residue chain is ATP-dependent Clp protease proteolytic subunit (193 aa).

The active-site Nucleophile is the serine 98. The active site involves histidine 123.

The protein belongs to the peptidase S14 family. In terms of assembly, fourteen ClpP subunits assemble into 2 heptameric rings which stack back to back to give a disk-like structure with a central cavity, resembling the structure of eukaryotic proteasomes.

Its subcellular location is the cytoplasm. The enzyme catalyses Hydrolysis of proteins to small peptides in the presence of ATP and magnesium. alpha-casein is the usual test substrate. In the absence of ATP, only oligopeptides shorter than five residues are hydrolyzed (such as succinyl-Leu-Tyr-|-NHMec, and Leu-Tyr-Leu-|-Tyr-Trp, in which cleavage of the -Tyr-|-Leu- and -Tyr-|-Trp bonds also occurs).. Its function is as follows. Cleaves peptides in various proteins in a process that requires ATP hydrolysis. Has a chymotrypsin-like activity. Plays a major role in the degradation of misfolded proteins. The chain is ATP-dependent Clp protease proteolytic subunit from Clostridium acetobutylicum (strain ATCC 824 / DSM 792 / JCM 1419 / IAM 19013 / LMG 5710 / NBRC 13948 / NRRL B-527 / VKM B-1787 / 2291 / W).